We begin with the raw amino-acid sequence, 172 residues long: Small ribosomal subunit protein uS5 (172 aa).

The 64-residue stretch at 15–78 folds into the S5 DRBM domain; it reads YIEKLVNIRR…DKARKRMKSV (64 aa).

The protein belongs to the universal ribosomal protein uS5 family. In terms of assembly, part of the 30S ribosomal subunit. Contacts proteins S4 and S8.

In terms of biological role, with S4 and S12 plays an important role in translational accuracy. Located at the back of the 30S subunit body where it stabilizes the conformation of the head with respect to the body. The chain is Small ribosomal subunit protein uS5 from Ruthia magnifica subsp. Calyptogena magnifica.